A 564-amino-acid chain; its full sequence is MRGAFLATAAAIAGTAMADIAHMRRHGHDSFHQRRAVEQPAPEADATCGCTTEVVTSWGPPTLIPIATSSPSSTVTSEVVTTLHSTSYSTVTLVVTPSGASPNRESAPATPAVTLPTPGVTSFSTTGTYTIPATTLTVTHSTTVCGATTTELPSGTHTYGGVTTVVDRHTTVVCPYATVEPSGSTVTSVIRTTTYVCPSAGTYTIAPTTTYVPTSTVIVYPTPATITPGTYTQPAQTITVTRDNYIYVCPFTGQQLPTTAPVAPATTAVPATTTAVPATTTAVPATSSVAPSSSPSKPAAPSGAVSGQMGMTYSPYTNEGGCKDKASIISEVALLKSKGFTHVRVYSTDCGSLEFIGEAARTSGLRMIIGVFIKQSGVAGAQDQVTAISKWAQWDLVSLIVVGNESIQNHFCDASTLAGFIVSAKQSFKAAGYSGQVTTTEPINVWQANGDALCGAVDIIGANIHPFFNADVSAAEAGKFVAQEFKTLKGICPGKDVINLETGWPHSGEANGKAIPSREEQAIAIKAIADEVGSMSVFFSYFDDLWKQPGAFGVERYWGCIENF.

The first 18 residues, 1-18 (MRGAFLATAAAIAGTAMA), serve as a signal peptide directing secretion. Positions 285 to 304 (ATSSVAPSSSPSKPAAPSGA) are disordered. A glycan (N-linked (GlcNAc...) asparagine) is linked at Asn404. Residue Glu405 is the Proton donor of the active site. Residue Glu501 is the Nucleophile of the active site.

It belongs to the glycosyl hydrolase 17 family.

It localises to the secreted. It is found in the cell wall. The catalysed reaction is Hydrolysis of terminal, non-reducing beta-D-glucosyl residues with release of beta-D-glucose.. It functions in the pathway glycan metabolism; cellulose degradation. Its function is as follows. Beta-glucosidases are one of a number of cellulolytic enzymes involved in the degradation of cellulosic biomass. Catalyzes the last step releasing glucose from the inhibitory cellobiose. This is Probable beta-glucosidase btgE (btgE) from Aspergillus clavatus (strain ATCC 1007 / CBS 513.65 / DSM 816 / NCTC 3887 / NRRL 1 / QM 1276 / 107).